We begin with the raw amino-acid sequence, 429 residues long: Protein phosphatase 2C homolog 2 (429 aa).

The PPM-type phosphatase domain maps to 16–291 (LYGLSAMQGW…DNMTMIIIGL (276 aa)). Mn(2+) contacts are provided by aspartate 64, glycine 65, aspartate 233, and aspartate 282. 2 disordered regions span residues 320–348 (YGKSEFRGPGIRNQFEETPDNYDLENDRS) and 384–429 (RDVT…SASS). Basic and acidic residues predominate over residues 384–397 (RDVTNHLQHDKAEE). Positions 405–419 (SESPSSANKNSSGSG) are enriched in low complexity.

This sequence belongs to the PP2C family. The cofactor is Mg(2+). Mn(2+) serves as cofactor.

It localises to the cytoplasm. The protein localises to the nucleus. It catalyses the reaction O-phospho-L-seryl-[protein] + H2O = L-seryl-[protein] + phosphate. It carries out the reaction O-phospho-L-threonyl-[protein] + H2O = L-threonyl-[protein] + phosphate. Functionally, dephosphorylating regulator for many key proteins. Dephosphorylates sakA, to negatively regulate the stress-activated p38MAPK cascade. The protein is Protein phosphatase 2C homolog 2 of Aspergillus fumigatus (strain ATCC MYA-4609 / CBS 101355 / FGSC A1100 / Af293) (Neosartorya fumigata).